A 579-amino-acid polypeptide reads, in one-letter code: UPF0324 membrane protein DVU_0943 (579 aa).

10 helical membrane-spanning segments follow: residues Tyr26–Ala45, Ala193–Met215, Phe225–Gly243, Tyr250–Thr272, Ile305–Phe327, Leu369–Ile391, Ala430–Trp452, Phe473–Gly495, Leu515–Phe533, and Leu546–Phe568.

Belongs to the UPF0324 family.

The protein resides in the cell membrane. The polypeptide is UPF0324 membrane protein DVU_0943 (Nitratidesulfovibrio vulgaris (strain ATCC 29579 / DSM 644 / CCUG 34227 / NCIMB 8303 / VKM B-1760 / Hildenborough) (Desulfovibrio vulgaris)).